Consider the following 599-residue polypeptide: Sulfite reductase [NADPH] flavoprotein alpha-component (599 aa).

The Flavodoxin-like domain occupies 64 to 202 (ITIISASQTG…AASEWRARVV (139 aa)). FMN-binding positions include 70–75 (SQTGNA), 117–120 (STQG), and 153–162 (LGDSSYEFFC). In terms of domain architecture, FAD-binding FR-type spans 234-448 (DAPLVASLSV…IEHNDNFRLP (215 aa)). Residues threonine 322, alanine 356, 386 to 389 (RLYS), 404 to 406 (TVG), tyrosine 410, and 419 to 422 (GGAS) contribute to the FAD site. NADP(+)-binding positions include 519–520 (SR), 525–529 (KVYVQ), and aspartate 561. Tyrosine 599 lines the FAD pocket.

Belongs to the NADPH-dependent sulphite reductase flavoprotein subunit CysJ family. This sequence in the N-terminal section; belongs to the flavodoxin family. The protein in the C-terminal section; belongs to the flavoprotein pyridine nucleotide cytochrome reductase family. Alpha(8)-beta(8). The alpha component is a flavoprotein, the beta component is a hemoprotein. FAD serves as cofactor. The cofactor is FMN.

The catalysed reaction is hydrogen sulfide + 3 NADP(+) + 3 H2O = sulfite + 3 NADPH + 4 H(+). Its pathway is sulfur metabolism; hydrogen sulfide biosynthesis; hydrogen sulfide from sulfite (NADPH route): step 1/1. Functionally, component of the sulfite reductase complex that catalyzes the 6-electron reduction of sulfite to sulfide. This is one of several activities required for the biosynthesis of L-cysteine from sulfate. The flavoprotein component catalyzes the electron flow from NADPH -&gt; FAD -&gt; FMN to the hemoprotein component. The polypeptide is Sulfite reductase [NADPH] flavoprotein alpha-component (Escherichia coli (strain ATCC 8739 / DSM 1576 / NBRC 3972 / NCIMB 8545 / WDCM 00012 / Crooks)).